Reading from the N-terminus, the 219-residue chain is MKFRLTALAVAALLTSTASFAGVVTTSSNVDFLAIDGQKASKSLIKQARSFNITDTNQHQVVVRVSEIIRGGSESNLFESDPIVVTFQGTTEDIQISAPTLRSERDVEKFKQSPVISVTTASGAAVQTKQEYLTQEGFLPSVNLVENLSNYNASGAKAAVASFATTTMPTAMGTTGAGKVAKGKVTVQGENAAEQMLQYWFQQADKETQTRFLNWAKKQ.

A signal peptide spans 1-21 (MKFRLTALAVAALLTSTASFA).

It belongs to the UPF0319 family.

This is UPF0319 protein MS0844 from Mannheimia succiniciproducens (strain KCTC 0769BP / MBEL55E).